We begin with the raw amino-acid sequence, 208 residues long: ATP phosphoribosyltransferase (208 aa).

Belongs to the ATP phosphoribosyltransferase family. Short subfamily. In terms of assembly, heteromultimer composed of HisG and HisZ subunits.

Its subcellular location is the cytoplasm. The enzyme catalyses 1-(5-phospho-beta-D-ribosyl)-ATP + diphosphate = 5-phospho-alpha-D-ribose 1-diphosphate + ATP. Its pathway is amino-acid biosynthesis; L-histidine biosynthesis; L-histidine from 5-phospho-alpha-D-ribose 1-diphosphate: step 1/9. Its function is as follows. Catalyzes the condensation of ATP and 5-phosphoribose 1-diphosphate to form N'-(5'-phosphoribosyl)-ATP (PR-ATP). Has a crucial role in the pathway because the rate of histidine biosynthesis seems to be controlled primarily by regulation of HisG enzymatic activity. The polypeptide is ATP phosphoribosyltransferase (Thermotoga petrophila (strain ATCC BAA-488 / DSM 13995 / JCM 10881 / RKU-1)).